Here is a 516-residue protein sequence, read N- to C-terminus: 2,3-bisphosphoglycerate-independent phosphoglycerate mutase (516 aa).

Mn(2+) contacts are provided by Asp-15 and Ser-65. Ser-65 functions as the Phosphoserine intermediate in the catalytic mechanism. Substrate is bound by residues His-126, 156–157 (RD), Arg-188, Arg-194, 263–266 (RADR), and Lys-336. 5 residues coordinate Mn(2+): Asp-403, His-407, Asp-444, His-445, and His-463.

Belongs to the BPG-independent phosphoglycerate mutase family. In terms of assembly, monomer. Mn(2+) is required as a cofactor.

It catalyses the reaction (2R)-2-phosphoglycerate = (2R)-3-phosphoglycerate. The protein operates within carbohydrate degradation; glycolysis; pyruvate from D-glyceraldehyde 3-phosphate: step 3/5. Its function is as follows. Catalyzes the interconversion of 2-phosphoglycerate and 3-phosphoglycerate. In Francisella tularensis subsp. holarctica (strain OSU18), this protein is 2,3-bisphosphoglycerate-independent phosphoglycerate mutase.